The sequence spans 21 residues: Ocellatin-2 (21 aa).

The residue at position 21 (I21) is an Isoleucine amide.

Expressed by the skin dorsal glands.

It localises to the secreted. Functionally, has hemolytic activity against human erythrocytes and antibacterial activity against the Gram-negative bacterium E.coli. This Leptodactylus ocellatus (Argus frog) protein is Ocellatin-2.